A 910-amino-acid polypeptide reads, in one-letter code: DNA mismatch repair protein MutS (910 aa).

Polar residues predominate over residues M1–G15. Residues M1–V94 are disordered. The segment covering D44–R54 has biased composition (low complexity). G726–S733 is an ATP binding site.

It belongs to the DNA mismatch repair MutS family.

This protein is involved in the repair of mismatches in DNA. It is possible that it carries out the mismatch recognition step. This protein has a weak ATPase activity. The chain is DNA mismatch repair protein MutS from Synechococcus sp. (strain WH7803).